The sequence spans 448 residues: FAD-dependent monooxygenase srdH (448 aa).

FAD-binding residues include Glu-32 and Arg-107. Gln-227 is an active-site residue. Residue Asp-313 coordinates FAD.

It belongs to the paxM FAD-dependent monooxygenase family. FAD serves as cofactor.

Highly reducing polyketide synthase; part of the gene cluster that mediates the biosynthesis of sordarial, a salicylic aldehyde structurally related to the phytotoxin pyriculol. The most interesting aspect of this pathway is formation of an aromatic product from the highly reducing polyketide synthase srdA. SrdA synthesizes a reduced polyketide chain from one molecule of acetyl-CoA and five molecules of malonyl-CoA. The polyketide chain is then reductively released as an aldehyde. The oxidoreductases srdC, srdD and srdE then oxidize one of the hydroxy groups to facilitate the intramolecular aldol condensation, followed by dehydration to yield a salicylic aldehyde. This aldehyde can undergo facile reduction by endogenous reductases to yield the alcohol 1-hydroxy-2-hydroxymethyl-3-pent-1,3-dienylbenzene. The flavin-dependent srdI counteract against the propensity of the aldehydes to be reduced under physiological conditions and is responsible for reoxidizing 1-hydroxy-2-hydroxymethyl-3-pent-1,3-dienylbenzene back to the salicylic aldehyde. This salicylic aldehyde is then selectively epoxidized by the cupin-domain-containing oxidoreductase srdB to yield the epoxide, which can be hydrolyzed stereoselectively by the hydrolase srdG to give the final product sordarial. The sequence is that of FAD-dependent monooxygenase srdH from Neurospora crassa (strain ATCC 24698 / 74-OR23-1A / CBS 708.71 / DSM 1257 / FGSC 987).